We begin with the raw amino-acid sequence, 438 residues long: (S)-3,5-dihydroxyphenylglycine transaminase (438 aa).

The residue at position 266 (Lys266) is an N6-(pyridoxal phosphate)lysine.

Belongs to the class-I pyridoxal-phosphate-dependent aminotransferase family. It depends on pyridoxal 5'-phosphate as a cofactor.

It carries out the reaction (S)-3,5-dihydroxyphenylglycine + 2-oxoglutarate = 2-(3,5-dihydroxyphenyl)-2-oxoacetate + L-glutamate. Its pathway is antibiotic biosynthesis; vancomycin biosynthesis. Functionally, catalyzes the transamination of p-hydroxybenzoylformate to L-p-hydroxyphenylglycine as part of the biosynthesis of the (S)-3,5-dihydroxyphenylglycine constituent of the glycopeptide antibiotic chloroeremomycin, a member of the vancomycin group of antibiotics. This chain is (S)-3,5-dihydroxyphenylglycine transaminase (hpgT), found in Amycolatopsis orientalis (Nocardia orientalis).